The sequence spans 493 residues: Putative glycerol-3-phosphate transporter 5 (493 aa).

The next 12 helical transmembrane spans lie at Phe25–His44, Leu83–His103, Phe113–Trp133, Val145–Gly165, Ser185–Trp205, Phe207–Val227, Phe292–Leu312, Gly328–Ile348, Ile352–Met372, Val375–Val395, Ala428–Ile448, and Gly452–Val472.

It belongs to the major facilitator superfamily. Organophosphate:Pi antiporter (OPA) (TC 2.A.1.4) family.

The protein resides in the membrane. This chain is Putative glycerol-3-phosphate transporter 5, found in Arabidopsis thaliana (Mouse-ear cress).